Reading from the N-terminus, the 361-residue chain is BBSome complex member bbs-5 (361 aa).

Belongs to the BBS5 family. As to quaternary structure, part of BBSome complex, that contains at least bbs-1, bbs-2, bbs-4, bbs-5, osm-12, bbs-8/ttc-8 and bbs-9. Interacts with bbs-4 (via C-terminus); the interaction is direct.

The protein resides in the cell projection. It localises to the cilium membrane. The protein localises to the cytoplasm. It is found in the cytoskeleton. Its subcellular location is the cilium basal body. The protein resides in the microtubule organizing center. It localises to the centrosome. The protein localises to the centriolar satellite. Its function is as follows. Component of the BBSome complex. The BBSome complex is thought to function as a coat complex required for sorting of specific membrane proteins to the primary cilia. The BBSome complex is required for ciliogenesis but is dispensable for centriolar satellite function. Required for BBSome complex ciliary localization but not for the proper complex assembly. Required, redundantly with bbs-4, for cilia biogenesis and both the assembly and movement of intraflagellar transport proteins along the ciliary axoneme. Plays a role in the removal of degraded mechanosensory receptors within the cilia. The protein is BBSome complex member bbs-5 of Caenorhabditis elegans.